The sequence spans 556 residues: Oxygen-dependent choline dehydrogenase (556 aa).

FAD is bound at residue 6 to 35; it reads DYIIIGAGSAGNVLAARLTEDPGVSVLLLE. The Proton acceptor role is filled by histidine 475.

This sequence belongs to the GMC oxidoreductase family. The cofactor is FAD.

It carries out the reaction choline + A = betaine aldehyde + AH2. It catalyses the reaction betaine aldehyde + NAD(+) + H2O = glycine betaine + NADH + 2 H(+). It participates in amine and polyamine biosynthesis; betaine biosynthesis via choline pathway; betaine aldehyde from choline (cytochrome c reductase route): step 1/1. In terms of biological role, involved in the biosynthesis of the osmoprotectant glycine betaine. Catalyzes the oxidation of choline to betaine aldehyde and betaine aldehyde to glycine betaine at the same rate. The chain is Oxygen-dependent choline dehydrogenase from Xanthomonas campestris pv. campestris (strain 8004).